Here is a 452-residue protein sequence, read N- to C-terminus: Keratin, type I cytoskeletal 15 (452 aa).

Residues methionine 1–asparagine 97 are head. Phosphoserine occurs at positions 15, 16, 28, 33, and 47. Residues glutamate 98–tryptophan 133 form a coil 1A region. Residues glutamate 98–methionine 410 form the IF rod domain. Position 124 is a phosphothreonine (threonine 124). The linker 1 stretch occupies residues tyrosine 134–threonine 152. A coil 1B region spans residues methionine 153 to phenylalanine 244. The tract at residues serine 245 to leucine 264 is linker 12. Residues threonine 265–glutamine 406 are coil 2. Residue lysine 293 forms a Glycyl lysine isopeptide (Lys-Gly) (interchain with G-Cter in SUMO2) linkage. A phosphothreonine mark is found at threonine 294 and threonine 316. Residues aspartate 407–isoleucine 452 form a tail region. Residues isoleucine 413 to isoleucine 452 form a disordered region. Lysine 443 participates in a covalent cross-link: Glycyl lysine isopeptide (Lys-Gly) (interchain with G-Cter in SUMO1); alternate. Lysine 443 is covalently cross-linked (Glycyl lysine isopeptide (Lys-Gly) (interchain with G-Cter in SUMO2); alternate).

It belongs to the intermediate filament family. As to quaternary structure, heterotetramer of two type I and two type II keratins. Forms a heterodimer with KRT14. Interacts with PLEC isoform 1C, when in a heterodimer with KRT14. Interacts with NOD2. As to expression, expressed strongly in the basal cell layer at the tips of rete-like prominences (RLPs) of adult dorsal tongue, outer root sheath (ORS) of hair follicle and skin epidermis (at protein level).

Functionally, in the absence of KRT14, makes a bona fide, but ultrastructurally distinct keratin filament network with KRT5. This chain is Keratin, type I cytoskeletal 15 (Krt15), found in Mus musculus (Mouse).